The chain runs to 466 residues: cAMP-dependent protein kinase regulatory subunit (466 aa).

Residues 25–231 are dimerization and phosphorylation; that stretch reads QFAANYFTKR…RLEKAVGKNF (207 aa). Positions 71 to 80 are enriched in low complexity; sequence ASLSHGSSKA. Disordered stretches follow at residues 71–90, 109–139, 154–179, and 193–218; these read ASLS…ISSS, STHI…PGIF, NSSV…VVNP, and SVSG…KSPE. Over residues 81-90 the composition is skewed to polar residues; the sequence is NASQSGISSS. Positions 109–118 are enriched in basic and acidic residues; that stretch reads STHIVDHLDS. The residue at position 193 (serine 193) is a Phosphoserine. A compositionally biased stretch (basic and acidic residues) spans 200–218; sequence QPDHLDDWKPENFQEKSPE. 3',5'-cyclic AMP is bound by residues 232 to 347, glutamate 297, arginine 306, 350 to 466, glutamate 416, and arginine 425; these read LFNK…LLKN and ILKS…RSKH.

The protein belongs to the cAMP-dependent kinase regulatory chain family. As to quaternary structure, tetramer, composed of 2 regulatory (R) and 2 catalytic (C) subunits. In the presence of cAMP it dissociates into 2 active monomeric C subunits and an R dimer.

This chain is cAMP-dependent protein kinase regulatory subunit (PKAR), found in Kluyveromyces lactis (strain ATCC 8585 / CBS 2359 / DSM 70799 / NBRC 1267 / NRRL Y-1140 / WM37) (Yeast).